Here is a 601-residue protein sequence, read N- to C-terminus: Nuclear envelope protein ndc1 (601 aa).

Topologically, residues Met-1–Ala-34 are cytoplasmic. The chain crosses the membrane as a helical span at residues Cys-35–Ile-55. Residues Ser-56–Ser-58 lie on the Perinuclear space side of the membrane. A helical transmembrane segment spans residues Phe-59–Val-79. The Cytoplasmic segment spans residues Met-80 to Lys-106. The chain crosses the membrane as a helical span at residues Ser-107 to Ile-127. Residues Lys-128–Arg-153 lie on the Perinuclear space side of the membrane. A helical transmembrane segment spans residues Phe-154–Tyr-174. At Leu-175–Arg-182 the chain is on the cytoplasmic side. The chain crosses the membrane as a helical span at residues Pro-183–Phe-203. The Perinuclear space portion of the chain corresponds to Ser-204–Leu-256. Residues Leu-257–Phe-277 form a helical membrane-spanning segment. At Arg-278–Ser-601 the chain is on the cytoplasmic side.

The protein belongs to the NDC1 family. Component of the nuclear pore complex (NPC). NPC constitutes the exclusive means of nucleocytoplasmic transport. NPCs allow the passive diffusion of ions and small molecules and the active, nuclear transport receptor-mediated bidirectional transport of macromolecules such as proteins, RNAs, ribonucleoparticles (RNPs), and ribosomal subunits across the nuclear envelope. Due to its 8-fold rotational symmetry, all subunits are present with 8 copies or multiples thereof.

It is found in the nucleus. Its subcellular location is the nuclear pore complex. It localises to the nucleus membrane. The protein localises to the cytoplasm. The protein resides in the cytoskeleton. It is found in the microtubule organizing center. Its subcellular location is the spindle pole body. Its function is as follows. Component of the nuclear pore complex (NPC) and the spindle pole body (SPB), which plays a key role in de novo assembly and insertion of both structures in the nuclear envelope. Involved in the formation of the bipolar mitotic spindle. Anchors the spindle pole body in the nuclear envelope. The polypeptide is Nuclear envelope protein ndc1 (cut11) (Schizosaccharomyces pombe (strain 972 / ATCC 24843) (Fission yeast)).